A 364-amino-acid chain; its full sequence is DNA polymerase IV (364 aa).

In terms of domain architecture, UmuC spans 14–198 (IIHIDMDAFF…LPIEKFHGVG (185 aa)). Positions 18 and 116 each coordinate Mg(2+). The active site involves glutamate 117.

This sequence belongs to the DNA polymerase type-Y family. Monomer. Mg(2+) serves as cofactor.

The protein resides in the cytoplasm. The catalysed reaction is DNA(n) + a 2'-deoxyribonucleoside 5'-triphosphate = DNA(n+1) + diphosphate. Functionally, poorly processive, error-prone DNA polymerase involved in untargeted mutagenesis. Copies undamaged DNA at stalled replication forks, which arise in vivo from mismatched or misaligned primer ends. These misaligned primers can be extended by PolIV. Exhibits no 3'-5' exonuclease (proofreading) activity. May be involved in translesional synthesis, in conjunction with the beta clamp from PolIII. The sequence is that of DNA polymerase IV from Streptococcus pyogenes serotype M2 (strain MGAS10270).